Reading from the N-terminus, the 230-residue chain is Flagellar L-ring protein (230 aa).

Positions 1–21 are cleaved as a signal peptide; it reads MMLKTVLRLPVCAALLALAAG. A lipid anchor (N-palmitoyl cysteine) is attached at cysteine 22. Cysteine 22 carries the S-diacylglycerol cysteine lipid modification. Residues 34–53 are disordered; the sequence is PLTAPPPPPPQPSARPNGSI. Over residues 36–46 the composition is skewed to pro residues; sequence TAPPPPPPQPS.

This sequence belongs to the FlgH family. In terms of assembly, the basal body constitutes a major portion of the flagellar organelle and consists of four rings (L,P,S, and M) mounted on a central rod.

The protein localises to the cell outer membrane. Its subcellular location is the bacterial flagellum basal body. Assembles around the rod to form the L-ring and probably protects the motor/basal body from shearing forces during rotation. In Bordetella parapertussis (strain 12822 / ATCC BAA-587 / NCTC 13253), this protein is Flagellar L-ring protein.